Reading from the N-terminus, the 323-residue chain is Deaminated glutathione amidase (323 aa).

A mitochondrion-targeting transit peptide spans 1 to 33 (MLGFITRPPHQLLCTGYRLLRTPVLCTQPRPRT). The CN hydrolase domain maps to 42 to 294 (LPLVAVCQVT…PGLCLARIDL (253 aa)). The active-site Proton acceptor is glutamate 82. Lysine 157 functions as the Proton donor in the catalytic mechanism. Cysteine 199 acts as the Nucleophile in catalysis.

Belongs to the carbon-nitrogen hydrolase superfamily. NIT1/NIT2 family. In terms of tissue distribution, expressed in most tissues with higher expression in adult liver and kidney as well as in fetal adrenal gland and skeletal muscle.

Its subcellular location is the mitochondrion. The protein localises to the cytoplasm. The catalysed reaction is N-(4-oxoglutaryl)-L-cysteinylglycine + H2O = L-cysteinylglycine + 2-oxoglutarate. It carries out the reaction N-(4-carboxy-4-oxobutanoyl)-L-ethylglycylglycine + H2O = N-(2-aminobutanoyl)glycine + 2-oxoglutarate. In terms of biological role, catalyzes the hydrolysis of the amide bond in N-(4-oxoglutarate)-L-cysteinylglycine (deaminated glutathione), a metabolite repair reaction to dispose of the harmful deaminated glutathione. Possesses amidase activity toward deaminated ophthalmate in vitro. Plays a role in cell growth and apoptosis: loss of expression promotes cell growth, resistance to DNA damage stress and increased incidence to NMBA-induced tumors. Has tumor suppressor properties that enhances the apoptotic responsiveness in cancer cells; this effect is additive to the tumor suppressor activity of FHIT. It is also a negative regulator of primary T-cells. The sequence is that of Deaminated glutathione amidase from Mus musculus (Mouse).